The chain runs to 372 residues: L-lysine 4-hydroxylase (372 aa).

Residues H176, E178, and H312 each coordinate Fe cation.

Belongs to the clavaminate synthase family. The cofactor is Fe(2+).

It carries out the reaction L-lysine + 2-oxoglutarate + O2 = (4R)-4-hydroxy-L-lysine + succinate + CO2. In terms of biological role, alpha-ketoglutarate-dependent dioxygenase that in vitro catalyzes the regio- and stereoselective hydroxylation of L-lysine, leading to (4R)-4-hydroxy-L-lysine. In Flavobacterium sp. (strain CF136), this protein is L-lysine 4-hydroxylase.